We begin with the raw amino-acid sequence, 388 residues long: Processive diacylglycerol beta-glucosyltransferase (388 aa).

Belongs to the glycosyltransferase 28 family. UgtP subfamily.

The protein localises to the cell membrane. It catalyses the reaction a 1,2-diacyl-3-O-(beta-D-glucopyranosyl)-sn-glycerol + UDP-alpha-D-glucose = a 1,2-diacyl-3-O-(beta-D-Glc-(1-&gt;6)-beta-D-Glc)-sn-glycerol + UDP + H(+). The catalysed reaction is a 1,2-diacyl-3-O-(beta-D-Glc-(1-&gt;6)-beta-D-Glc)-sn-glycerol + UDP-alpha-D-glucose = a 1,2-diacyl-3-O-(beta-D-Glc-(1-&gt;6)-beta-D-Glc-(1-&gt;6)-beta-D-Glc)-sn-glycerol + UDP + H(+). It carries out the reaction a 1,2-diacyl-sn-glycerol + UDP-alpha-D-glucose = a 1,2-diacyl-3-O-(beta-D-glucopyranosyl)-sn-glycerol + UDP + H(+). Its pathway is glycolipid metabolism; diglucosyl-diacylglycerol biosynthesis. Functionally, processive glucosyltransferase involved in the biosynthesis of both the bilayer- and non-bilayer-forming membrane glucolipids. Is able to successively transfer up to three glucosyl residues to diacylglycerol (DAG), thereby catalyzing the formation of beta-monoglucosyl-DAG (3-O-(beta-D-glucopyranosyl)-1,2-diacyl-sn-glycerol), beta-diglucosyl-DAG (3-O-(beta-D-glucopyranosyl-beta-(1-&gt;6)-D-glucopyranosyl)-1,2-diacyl-sn-glycerol) and beta-triglucosyl-DAG (3-O-(beta-D-glucopyranosyl-beta-(1-&gt;6)-D-glucopyranosyl-beta-(1-&gt;6)-D-glucopyranosyl)-1,2-diacyl-sn-glycerol). Beta-diglucosyl-DAG is the predominant glycolipid found in Bacillales and is also used as a membrane anchor for lipoteichoic acid (LTA). In Bacillus cereus (strain ATCC 10987 / NRS 248), this protein is Processive diacylglycerol beta-glucosyltransferase.